A 260-amino-acid chain; its full sequence is LIM and SH3 domain protein 1 (260 aa).

The residue at position 1 (methionine 1) is an N-acetylmethionine. One can recognise an LIM zinc-binding domain in the interval 5-56 (CARCCKIVYPTEKVNCLDKFWHKACFHCETCKMTLNMKNYKGYEKKPYCNAH). The residue at position 42 (lysine 42) is an N6-acetyllysine. Nebulin repeat units follow at residues 61–95 (SFTM…KNKG) and 97–131 (GFSV…KSRM). Residue threonine 68 is modified to Phosphothreonine. Lysine 75 is modified (N6-methyllysine). Serine 99 carries the phosphoserine modification. A Phosphothreonine modification is found at threonine 104. Lysine 112 is subject to N6-succinyllysine. Residues serine 118 and serine 134 each carry the phosphoserine modification. The disordered stretch occupies residues 123-204 (HEEFEKSRMG…QRSAPGGGGK (82 aa)). The segment covering 140–155 (ECERRDPQESSYRRPQ) has biased composition (basic and acidic residues). Positions 171 to 180 (QQPQQQPAAQ) are enriched in low complexity. One can recognise an SH3 domain in the interval 201-260 (GGGKRYRAVYDYSAADEDEVSFQDGDTIVNVQQIDDGWMYGTVERTGDTGMLPANYVEAI).

Interacts with F-actin. Interacts with ANKRD54. Interacts with KBTBD10. In terms of processing, phosphorylated.

The protein localises to the cytoplasm. The protein resides in the cell cortex. It is found in the cytoskeleton. Functionally, plays an important role in the regulation of dynamic actin-based, cytoskeletal activities. Agonist-dependent changes in LASP1 phosphorylation may also serve to regulate actin-associated ion transport activities, not only in the parietal cell but also in certain other F-actin-rich secretory epithelial cell types. The chain is LIM and SH3 domain protein 1 (LASP1) from Bos taurus (Bovine).